Reading from the N-terminus, the 395-residue chain is Serine/threonine-protein kinase BIK1 (395 aa).

Gly2 carries N-myristoyl glycine lipidation. The S-palmitoyl cysteine moiety is linked to residue Cys4. Residue Ser26 is modified to Phosphoserine. Residue Lys31 forms a Glycyl lysine isopeptide (Lys-Gly) (interchain with G-Cter in ubiquitin) linkage. Phosphoserine occurs at positions 32, 33, and 34. Residue Thr35 is modified to Phosphothreonine. Lys41 is covalently cross-linked (Glycyl lysine isopeptide (Lys-Gly) (interchain with G-Cter in ubiquitin)). Position 42 is a phosphothreonine (Thr42). Ser48 carries the phosphoserine; by autocatalysis and BAK1 modification. At Thr50 the chain carries Phosphothreonine. Ser54 carries the post-translational modification Phosphoserine; by autocatalysis. Thr56 bears the Phosphothreonine; by autocatalysis mark. Thr64 is modified (phosphothreonine). Positions 67 to 356 (FRPDSVIGEG…RALQQLQDNL (290 aa)) constitute a Protein kinase domain. At Ser71 the chain carries Phosphoserine; by autocatalysis and BAK1. 73–81 (IGEGGFGCV) provides a ligand contact to ATP. A Phosphoserine; by EFR modification is found at Ser89. Positions 89 to 90 (ST) match the Required for physical interaction with and phosphorylation of downstream signaling proteins (e.g. WRKY33, WRKY50, WRKY51 and WRKY57) to activate EFR-mediated immune signaling motif. Thr90 carries the phosphothreonine; by EFR modification. Lys95 is covalently cross-linked (Glycyl lysine isopeptide (Lys-Gly) (interchain with G-Cter in ubiquitin)). ATP is bound at residue Lys105. Thr120 carries the post-translational modification Phosphothreonine; by EFR. At Ser129 the chain carries Phosphoserine; by autocatalysis. At Ser129 the chain carries Phosphoserine; by EFR. Tyr150 carries the post-translational modification Phosphotyrosine. At Tyr168 the chain carries Phosphotyrosine; by autocatalysis. Glycyl lysine isopeptide (Lys-Gly) (interchain with G-Cter in ubiquitin) cross-links involve residues Lys170 and Lys186. Position 193 is a phosphoserine (Ser193). The active-site Proton acceptor is Asp202. Ser206 is modified (phosphoserine; by autocatalysis and BAK1). Phosphotyrosine; by autocatalysis is present on Tyr214. The residue at position 219 (Ser219) is a Phosphoserine. Ser233 bears the Phosphoserine; by autocatalysis mark. Ser236 carries the post-translational modification O-UMP-serine; by Xanthomonas campestris effector XopAC/AvrAC; alternate. Ser236 bears the Phosphoserine; by autocatalysis and BAK1; alternate mark. The residue at position 237 (Thr237) is an O-UMP-threonine; by Xanthomonas campestris effector XopAC/AvrAC; alternate. Phosphothreonine; by autocatalysis and BAK1; alternate is present on Thr237. Thr242 bears the Phosphothreonine; by autocatalysis and BAK1 mark. Residue Tyr243 is modified to Phosphotyrosine. Tyr250 carries the phosphotyrosine; by autocatalysis modification. A phosphoserine; by autocatalysis mark is found at Ser252 and Ser253. Lys286 is covalently cross-linked (Glycyl lysine isopeptide (Lys-Gly) (interchain with G-Cter in ubiquitin)). Thr314 carries the phosphothreonine; by autocatalysis modification. A Glycyl lysine isopeptide (Lys-Gly) (interchain with G-Cter in ubiquitin) cross-link involves residue Lys337. Phosphothreonine is present on Thr341. Polar residues predominate over residues 354 to 365 (DNLGKPSQTNPV). Positions 354-395 (DNLGKPSQTNPVKDTKKLGFKTGTTKSSEKRFTQKPFGRHLV) are disordered. Lys358 is covalently cross-linked (Glycyl lysine isopeptide (Lys-Gly) (interchain with G-Cter in ubiquitin)). Ser360 is subject to Phosphoserine; by autocatalysis and BAK1. Thr362 is modified (phosphothreonine; by autocatalysis and BAK1). Residue Lys366 forms a Glycyl lysine isopeptide (Lys-Gly) (interchain with G-Cter in ubiquitin) linkage. Thr368 carries the phosphothreonine; by autocatalysis and BAK1 modification. Phosphothreonine occurs at positions 375 and 377.

The protein belongs to the protein kinase superfamily. Ser/Thr protein kinase family. In terms of assembly, interacts with FLS2. Activation of FLS2 by flagellin (flg22) induces the dissociation of the complex. Interacts with BAK1. Interacts with the Xanthomonas campestris effector XopAC/AvrAC. Interacts with CPK28. Interacts with PEPR1. Interacts with PP2C38. Interacts with BRI1. Interacts with RBOHD. Binds to EFR when not phosphorylated at Ser-89 and Thr-90, in the absence of pathogen elicitor; dissociates upon pathogen-associated molecular pattern (PAMP)-triggered activation by EFR-mediated phosphorylation. Interacts directly with and phosphorylates WRKY transcription factors in the nucleus involved in the jasmonic acid (JA) and salicylic acid (SA) regulation (e.g. WRKY33, WRKY50, WRKY51 and WRKY57) to modulate defense hormones during plant immunity. Binds to ATL44/RHA3A and ATL45/RHA3B. Binds to SIK1 to be phosphorylated and stabilized. Phosphorylated by SIK1 to be stabilized. Phosphorylated by FLS2 and BAK1. Autophosphorylated. Autophosphorylation is reduced in presence of the Xanthomonas campestris effector XopAC/AvrAC. Phosphorylated, especially by EFR at Ser-89 and Thr-90, in response to the microbe-associated molecular pattern (MAMP) flg22. Phosphorylation in response to flg22 is abolished in presence of the Xanthomonas campestris effector XopAC/AvrAC. Phosphorylated at Ser-233, Ser-236 and Thr-237 by PEPR1. Phosphorylated at Tyr-150, Tyr-243 and Tyr-250. Tyrosine phosphorylation is required for BIK1 function in plant innate immunity. In terms of processing, uridylylated at Ser-236 and Thr-237 by the Xanthomonas campestris effector XopAC/AvrAC. This conceals conserved phosphorylation sites in the activation loop, reducing BIK1 kinase activity and consequently inhibiting downstream signaling. Post-translationally, monoubiquitinated by ATL44/RHA3A and ATL45/RHA3B following phosphorylation upon the recognition of microbe-associated molecular patterns (MAMPs, e.g. flg22) by pattern recognition receptors (PRRs), then released from the FLS2/BAK1 complex and internalized dynamically into endocytic compartments followed by the activation of immune signaling.

The protein resides in the cell membrane. The protein localises to the endosome membrane. Its subcellular location is the nucleus. It carries out the reaction L-seryl-[protein] + ATP = O-phospho-L-seryl-[protein] + ADP + H(+). It catalyses the reaction L-threonyl-[protein] + ATP = O-phospho-L-threonyl-[protein] + ADP + H(+). With respect to regulation, kinase activation is repressed by the phosphatase PP2C38. Plays a central role in immune responses. Required to activate the resistance responses to necrotrophic pathogens, including the regulation of defense hormone expression (e.g. jasmonic acid (JA) and salicylic acid (SA)). Phosphorylates FLS2 and BAK1. Involved in pathogen-associated molecular pattern (PAMP)-triggered immunity (PTI) signaling, including calcium signaling, and defense responses downstream of FLS2; upon PAMP recognition, first phosphorylated by FLS2 and SIK1 prior to being monoubiquitinated by ATL44/RHA3A and ATL45/RHA3B at the plasma membrane, then internalized dynamically into endocytic compartments together with FLS2. Acts additively with PBL1 in PTI defenses. Acts as a positive regulator of the PAMP flg22-induced increase of cytosolic calcium. Upon flg22 perception, phosphorylates and activates the calcium-permeable channel OSCA1.3, promoting stomatal closure. Phosphorylates the NADPH oxidase RBOHD at specific sites in a calcium-independent manner to enhance reactive oxygen species (ROS) generation upon flg22 perception. ROS production in response to flg22 controls stomatal movement and restriction of bacterial entry into leaf tissues. Seems not required for flg22-induced MAPK activation. Required for Pep1-induced defenses. Pep1 is an endogenous elicitor that potentiates PAMP-inducible plant responses. In association with PEPR1, acts downstream of the canonical ethylene signaling cascade to regulate ethylene responses. Involved in ethylene signaling. Destabilizes EIN3, the key transcription activator in ethylene signaling, and represses EIN3-dependent transcription. Acts as a negative regulator in brassinosteroid (BR) signaling. Functions in BR signaling by direct interaction with the BR receptor BRI1 cytosolic kinase domain. Required during SCOOP small peptides (e.g. SCOOP10 and SCOOP12) perception and signaling; receptor-like cytosolic kinases (RLCK) activated by BAK1/SERK3 and SERK4 coreceptors when associated with MIK2 upon the perception of SCOOP peptides. In terms of biological role, (Microbial infection) Xanthomonas campestris effector AvrAC/XopAC-mediated uridylylation prevents activation by phosphorylation at the same residues, thus affecting immune responses and reducing defense responses toward X.campestris, mediating avrAC/XopAC virulence functions. The sequence is that of Serine/threonine-protein kinase BIK1 from Arabidopsis thaliana (Mouse-ear cress).